The chain runs to 630 residues: Replication protein E1 (630 aa).

Residues 26–46 (RKTGDTISDDESEEENETDTD) form a disordered region. Residues 32 to 46 (ISDDESEEENETDTD) show a composition bias toward acidic residues. A Nuclear localization signal motif is present at residues 86-88 (KRK). Position 92 is a phosphoserine; by host (Ser92). Residues 136–166 (EKGNGCGSSQNGGSQNSNCSEHSVSNMDIDT) are disordered. Residues 142-155 (GSSQNGGSQNSNCS) show a composition bias toward low complexity. Residues 156-166 (EHSVSNMDIDT) are compositionally biased toward polar residues. The interval 167-333 (NMETPTHQLQ…QTQLQHSLQD (167 aa)) is DNA-binding region. The region spanning 432 to 582 (VDFISFLSYF…FPLDNNGNPV (151 aa)) is the SF3 helicase domain. 458 to 465 (GPPNTGKS) serves as a coordination point for ATP. A Glycyl lysine isopeptide (Lys-Gly) (interchain with G-Cter in SUMO) cross-link involves residue Lys539.

This sequence belongs to the papillomaviridae E1 protein family. In terms of assembly, can form hexamers. Interacts with E2 protein; this interaction increases E1 DNA binding specificity. Interacts with host DNA polymerase subunit POLA2. Interacts with host single stranded DNA-binding protein RPA1. Interacts with host TOP1; this interaction stimulates the enzymatic activity of TOP1. Phosphorylated. In terms of processing, sumoylated.

The protein resides in the host nucleus. It carries out the reaction Couples ATP hydrolysis with the unwinding of duplex DNA by translocating in the 3'-5' direction.. The catalysed reaction is ATP + H2O = ADP + phosphate + H(+). ATP-dependent DNA 3'-5' helicase required for initiation of viral DNA replication. It forms a complex with the viral E2 protein. The E1-E2 complex binds to the replication origin which contains binding sites for both proteins. During the initial step, a dimer of E1 interacts with a dimer of protein E2 leading to a complex that binds the viral origin of replication with high specificity. Then, a second dimer of E1 displaces the E2 dimer in an ATP-dependent manner to form the E1 tetramer. Following this, two E1 monomers are added to each half of the site, which results in the formation of two E1 trimers on the viral ori. Subsequently, two hexamers will be created. The double hexamer acts as a bi-directional helicase machinery and unwinds the viral DNA and then recruits the host DNA polymerase to start replication. The protein is Replication protein E1 of Homo sapiens (Human).